The following is a 343-amino-acid chain: Calcium/calmodulin-dependent protein kinase type 1B (343 aa).

One can recognise a Protein kinase domain in the interval 15-270 (YEIRERLGSG…CQQALRHLWI (256 aa)). Residues 21–29 (LGSGAFSEV) and Lys-44 each bind ATP. The Proton acceptor role is filled by Asp-136. Residues 290–311 (KNFARTHWKRAFNATSFLRHIR) form a calmodulin-binding region. Residues 319–343 (GEGASEQGMARHSHSGLRAGQPPKW) are disordered.

It belongs to the protein kinase superfamily. CAMK Ser/Thr protein kinase family. CaMK subfamily. Phosphorylated by CAMKK1.

The protein resides in the cytoplasm. The protein localises to the nucleus. The enzyme catalyses L-seryl-[protein] + ATP = O-phospho-L-seryl-[protein] + ADP + H(+). It catalyses the reaction L-threonyl-[protein] + ATP = O-phospho-L-threonyl-[protein] + ADP + H(+). Its activity is regulated as follows. Activated by Ca(2+)/calmodulin. Functionally, calcium/calmodulin-dependent protein kinase belonging to a proposed calcium-triggered signaling cascade. In vitro phosphorylates CREB1 and SYN1/synapsin I. Phosphorylates and activates CAMK1. This Homo sapiens (Human) protein is Calcium/calmodulin-dependent protein kinase type 1B (PNCK).